Reading from the N-terminus, the 321-residue chain is Putative zinc finger CCCH domain-containing protein 9 (321 aa).

Disordered stretches follow at residues M1 to K59 and R181 to E269. Positions E10 to K29 are enriched in basic and acidic residues. A C3H1-type zinc finger spans residues R55–Q83. Residues T164–R290 are a coiled coil. Basic and acidic residues-rich tracts occupy residues R181 to Q224 and R231 to Q244.

The chain is Putative zinc finger CCCH domain-containing protein 9 from Arabidopsis thaliana (Mouse-ear cress).